The primary structure comprises 735 residues: MSDHIFFASAPKHLGSLLAEELTRLGMAGAAETRGGARFSGRIEDGYRACLWSRIANRILLPLAQVSLGGPDEIHDSALEIPWEDHLTPDRTFAIQFDGQLQGVTNPHFAILQVKDAIADRFNRLYGRRPSVDPDDPDLRIHLYGNRDSLSFSLDLSGESLHQRGYRDAGSAAPLKENLAAALLLRAGWPEIAAEGGALLDPMCGSGTLIIEGALIAADIAPGLLRERFGFHGWTQHDEPAWQRLLAEARLRRTAGLKRLGSLRGYDVNPNAIRTSLHHLERAGLAGLAHFERRELSDCHPGREDDEGLVIVNPPYGERLGADEDLTQLYARLGSVLKERFVGWRAAVFTSSPELGKSLGLRATRIHSLYNGPIECRLLSFQIEPRYFVSHLPRPLPPEERSPGAAMFANRLSKNLKALRKWRQRDGIDCLRIYDADLPEYALAIDLYEGERRWVHVQEYAAPPSVDPKRARQRLREALGLIPEVLEVPGEQVFLKVRRQQKGRAQYERLAETGRFHEVSEYGLRFLVNFEDYLDTGLFLDHRDVRRLIGSLSDGKRFLNLFAYTGTATVHAAKGGAASTTTVDLSRTYLEWAGRNLELNGIRGPNHQLIQADCLRWIDSMAGQRRFDLIFLDPPSFSTSKRMHGTLDIQRDHVDIIQATMRLLEPGGRLIFSNNLRRFRIDLEGLAPFEVSDISAQTLPRDFARNPRIHNCWVIQHPESASNRRNGSDDEDRHA.

Residues 45 to 156 (DGYRACLWSR…RDSLSFSLDL (112 aa)) enclose the THUMP domain.

This sequence belongs to the methyltransferase superfamily. RlmKL family.

The protein localises to the cytoplasm. It catalyses the reaction guanosine(2445) in 23S rRNA + S-adenosyl-L-methionine = N(2)-methylguanosine(2445) in 23S rRNA + S-adenosyl-L-homocysteine + H(+). It carries out the reaction guanosine(2069) in 23S rRNA + S-adenosyl-L-methionine = N(2)-methylguanosine(2069) in 23S rRNA + S-adenosyl-L-homocysteine + H(+). Specifically methylates the guanine in position 2445 (m2G2445) and the guanine in position 2069 (m7G2069) of 23S rRNA. In Allochromatium vinosum (strain ATCC 17899 / DSM 180 / NBRC 103801 / NCIMB 10441 / D) (Chromatium vinosum), this protein is Ribosomal RNA large subunit methyltransferase K/L.